The sequence spans 213 residues: Ras-related protein Rab-39B (213 aa).

The GTP site is built by Ser17, Gly20, Lys21, Ser22, Cys23, Ser37, and Thr40. Ser22 provides a ligand contact to Mg(2+). The interval 35-43 (QVSDPTVGV) is switch-I. Mg(2+)-binding residues include Thr40 and Asp64. Residues Gly67, His123, Lys124, Asp126, Ala154, and Arg155 each coordinate GTP. Residues 67–83 (GQERFRSITRAYYRNSV) form a switch-II region. A Phosphoserine modification is found at Ser201. Residues Cys211 and Cys213 are each lipidated (S-geranylgeranyl cysteine). Cysteine methyl ester is present on Cys213.

It belongs to the small GTPase superfamily. Rab family. In terms of assembly, interacts (GDP-bound) with C9orf72; C9orf72 in complex with SMCR8 acts as a GEF for RAB39B. Interacts (in GTP-bound form) with PICK1 (via PDZ domain); a PICK1 homodimer may allow simultaneous association of RAB39B and GRIA2 to PICK1 which is involved in GRIA2 trafficking. Interacts with isoform c of RASSF1; the interaction is strong. Interacts with isoform a of RASSF1; the interaction is weak. Interacts with the DLG4/PSD-95. Interacts (GTP-bound) with HOPS complex components VPS39 and VPS41. Mg(2+) serves as cofactor.

The protein resides in the cell membrane. Its subcellular location is the cytoplasmic vesicle membrane. The protein localises to the golgi apparatus. It is found in the cytoplasmic vesicle. It localises to the autophagosome membrane. The protein resides in the autolysosome membrane. The enzyme catalyses GTP + H2O = GDP + phosphate + H(+). With respect to regulation, regulated by guanine nucleotide exchange factors (GEFs) including C9orf72-SMCR8 complex, which promote the exchange of bound GDP for free GTP. Regulated by GTPase activating proteins (GAPs) which increase the GTP hydrolysis activity. Inhibited by GDP dissociation inhibitors (GDIs). Its function is as follows. The small GTPases Rab are key regulators of intracellular membrane trafficking, from the formation of transport vesicles to their fusion with membranes. Rabs cycle between an inactive GDP-bound form and an active GTP-bound form that is able to recruit to membranes different sets of downstream effectors directly responsible for vesicle formation, movement, tethering and fusion. RAB39B is involved in autophagy and may function in autophagosome formation. Binds downstream effector PICK1 to ensure selectively GRIA2 exit from the endoplasmic reticulum to the Golgi and to regulate AMPAR composition at the post-synapses and thus synaptic transmission. May regulate the homeostasis of SNCA/alpha-synuclein. The protein is Ras-related protein Rab-39B (RAB39B) of Bos taurus (Bovine).